A 409-amino-acid chain; its full sequence is Pentatricopeptide repeat-containing protein At5g09450, mitochondrial (409 aa).

The N-terminal 38 residues, 1-38, are a transit peptide targeting the mitochondrion; sequence MATRSLFHSLRCRLTNNGVLGSNFIRNAESSRFSKSYN. 6 PPR repeats span residues 155–189, 191–225, 226–256, 262–296, 298–332, and 333–367; these read TAETYTSLLHAYAASKQTERAEALFKRIIESDSLT, GAITYNEMMTLYMSVGQVEKVPEVIEVLKQKKVSP, DIFTYNLWLSSCAATFNIDELRKILEEMRHD, GWVRYIDLTSIYINSSRVTNAESTLPVEAEKSISQ, EWITYDFLMILHTGLGNKVMIDQIWKSLRNTNQIL, and SSRSYICVLSSYLMLGHLREAEEIIHQWKESKTTE.

It belongs to the PPR family. P subfamily.

The protein resides in the mitochondrion. The sequence is that of Pentatricopeptide repeat-containing protein At5g09450, mitochondrial from Arabidopsis thaliana (Mouse-ear cress).